A 120-amino-acid polypeptide reads, in one-letter code: Ribosome-binding factor A (120 aa).

Belongs to the RbfA family. In terms of assembly, monomer. Binds 30S ribosomal subunits, but not 50S ribosomal subunits or 70S ribosomes.

Its subcellular location is the cytoplasm. Its function is as follows. One of several proteins that assist in the late maturation steps of the functional core of the 30S ribosomal subunit. Associates with free 30S ribosomal subunits (but not with 30S subunits that are part of 70S ribosomes or polysomes). Required for efficient processing of 16S rRNA. May interact with the 5'-terminal helix region of 16S rRNA. In Clostridium botulinum (strain 657 / Type Ba4), this protein is Ribosome-binding factor A.